Consider the following 286-residue polypeptide: Probable endonuclease 4 (286 aa).

Zn(2+) contacts are provided by histidine 71, histidine 111, glutamate 147, aspartate 181, histidine 184, histidine 218, aspartate 231, histidine 233, and glutamate 263.

It belongs to the AP endonuclease 2 family. Requires Zn(2+) as cofactor.

It carries out the reaction Endonucleolytic cleavage to 5'-phosphooligonucleotide end-products.. In terms of biological role, endonuclease IV plays a role in DNA repair. It cleaves phosphodiester bonds at apurinic or apyrimidinic (AP) sites, generating a 3'-hydroxyl group and a 5'-terminal sugar phosphate. The protein is Probable endonuclease 4 of Vibrio cholerae serotype O1 (strain ATCC 39541 / Classical Ogawa 395 / O395).